A 431-amino-acid chain; its full sequence is Trigger factor (431 aa).

In terms of domain architecture, PPIase FKBP-type spans 164-249; that stretch reads GDIAVIDFKG…IKEIKRKELP (86 aa).

The protein belongs to the FKBP-type PPIase family. Tig subfamily.

The protein localises to the cytoplasm. The enzyme catalyses [protein]-peptidylproline (omega=180) = [protein]-peptidylproline (omega=0). Its function is as follows. Involved in protein export. Acts as a chaperone by maintaining the newly synthesized protein in an open conformation. Functions as a peptidyl-prolyl cis-trans isomerase. The polypeptide is Trigger factor (Clostridium acetobutylicum (strain ATCC 824 / DSM 792 / JCM 1419 / IAM 19013 / LMG 5710 / NBRC 13948 / NRRL B-527 / VKM B-1787 / 2291 / W)).